The following is a 280-amino-acid chain: Shikimate dehydrogenase (NADP(+)) (280 aa).

Shikimate-binding positions include 20 to 22 (SRS) and T67. Residue K71 is the Proton acceptor of the active site. D82 is a binding site for NADP(+). Positions 91 and 106 each coordinate shikimate. Residues 131 to 135 (GAGGS) and L220 each bind NADP(+). Position 222 (Y222) interacts with shikimate. G243 serves as a coordination point for NADP(+).

This sequence belongs to the shikimate dehydrogenase family. In terms of assembly, homodimer.

The enzyme catalyses shikimate + NADP(+) = 3-dehydroshikimate + NADPH + H(+). It functions in the pathway metabolic intermediate biosynthesis; chorismate biosynthesis; chorismate from D-erythrose 4-phosphate and phosphoenolpyruvate: step 4/7. Its function is as follows. Involved in the biosynthesis of the chorismate, which leads to the biosynthesis of aromatic amino acids. Catalyzes the reversible NADPH linked reduction of 3-dehydroshikimate (DHSA) to yield shikimate (SA). In Rhodopseudomonas palustris (strain HaA2), this protein is Shikimate dehydrogenase (NADP(+)).